Reading from the N-terminus, the 316-residue chain is Bifunctional peptidase and (3S)-lysyl hydroxylase JMJD7 (316 aa).

The 180-residue stretch at 128 to 307 (VQKQCSNLPS…LKYSYFQLLD (180 aa)) folds into the JmjC domain. Positions 178, 180, and 277 each coordinate Fe cation.

As to quaternary structure, homodimer; disulfide-linked. Interacts with DRG1 and DRG2. It depends on Fe(2+) as a cofactor.

It is found in the nucleus. It localises to the cytoplasm. The catalysed reaction is L-lysyl-[protein] + 2-oxoglutarate + O2 = (3S)-3-hydroxy-L-lysyl-[protein] + succinate + CO2. In terms of biological role, bifunctional enzyme that acts both as an endopeptidase and 2-oxoglutarate-dependent monooxygenase. Endopeptidase that cleaves histones N-terminal tails at the carboxyl side of methylated arginine or lysine residues, to generate 'tailless nucleosomes', which may trigger transcription elongation. Preferentially recognizes and cleaves monomethylated and dimethylated arginine residues of histones H2, H3 and H4. After initial cleavage, continues to digest histones tails via its aminopeptidase activity. Additionally, may play a role in protein biosynthesis by modifying the translation machinery. Acts as a Fe(2+) and 2-oxoglutarate-dependent monooxygenase, catalyzing (S)-stereospecific hydroxylation at C-3 of 'Lys-22' of DRG1 and 'Lys-21' of DRG2 translation factors (TRAFAC), promoting their interaction with ribonucleic acids (RNA). This is Bifunctional peptidase and (3S)-lysyl hydroxylase JMJD7 from Homo sapiens (Human).